A 653-amino-acid polypeptide reads, in one-letter code: Epithelial sodium channel subunit gamma (653 aa).

The Cytoplasmic portion of the chain corresponds to 1–55; sequence MAPGEKIKAKIKKNLPVKGPQAPTIKELMRWYCLNTNTHGCRRIVVSPGRLRRLL. Residues 56–76 form a helical membrane-spanning segment; that stretch reads WIAFTLTAVGLIFWQCALLVF. Over 77–538 the chain is Extracellular; the sequence is SFYTVSVSIK…EMLLSNFGGQ (462 aa). 8 disulfide bridges follow: Cys-100–Cys-287, Cys-211–Cys-218, Cys-264–Cys-271, Cys-376–Cys-461, Cys-398–Cys-457, Cys-402–Cys-453, Cys-411–Cys-438, and Cys-413–Cys-427. Positions 137-225 are gating release of inhibition by proteolysis (GRIP); protease-sensitive region that is responsible for the proteolytic activation of the channel; it reads RKQRDTESWS…SDCATYTFSS (89 aa). N-linked (GlcNAc...) asparagine glycosylation is present at Asn-213. An N-linked (GlcNAc...) asparagine glycan is attached at Asn-275. The N-linked (GlcNAc...) asparagine glycan is linked to Asn-501. Residues 539-559 form a helical membrane-spanning segment; the sequence is LGLWMSCSVVCVIEIIEVFFI. Residues 560-653 are Cytoplasmic-facing; it reads DSLSIVTRRQ…LADTRLPDEP (94 aa). Residues 582–632 are disordered; sequence AAPSAEAPSGAQGQENPALEIDDDLPTFTSALSLPPAPGAQVPGTPPPRYN. Positions 627 to 631 match the PY motif; recruits WW domain-containing proteins and is thereby required for ubiquitination and inhibition of the channel by NEDD4 and NEDD4L motif; it reads PPPRY.

The protein belongs to the amiloride-sensitive sodium channel (TC 1.A.6) family. SCNN1G subfamily. As to quaternary structure, component of the heterotrimeric epithelial sodium channel (ENaC) composed of an alpha/SCNN1A, a beta/SCNN1B and a gamma/SCNN1G subunit. Interacts with WWP1 (via WW domains). Interacts with WWP2 (via WW domains); inhibits the channel. Interacts with the full-length immature form of PCSK9 (pro-PCSK9); inhibits ENaC by promoting its proteasomal degradation. Interacts with BPIFA1; the interaction is indirect via SCNN1B and inhibits the proteolytic maturation of SCNN1A and SCNN1G and the activation of ENaC. Post-translationally, phosphorylated on serine and threonine residues. Aldosterone and insulin increase the basal level of phosphorylation. Ubiquitinated. Can be ubiquitinated at multiple sites and undergo monoubiquitination and polyubiquitination. Ubiquitination by NEDD4 or NEDD4L inhibits the ENaC channel through endocytosis, intracellular retention and degradation of its individual subunits. In terms of processing, ENaC is activated through the proteolytic maturation of its subunits. Furin cleaves the SCNN1G subunit first, followed by cleavage by prostasin (PRSS8), which results in a stepwise increase in the open probability of the channel due to the release of an inhibitory tract. BPIFA1, which is recruited by the SCNN1B subunit, prevents the proteolytic activation of ENaC. Post-translationally, N-glycosylated. N-linked glycans are processed to complex type during ENaC complex assembly and transport to the plasma membrane.

The protein localises to the apical cell membrane. The catalysed reaction is Na(+)(in) = Na(+)(out). With respect to regulation, originally identified and characterized by its inhibition by the diuretic drug amiloride. Functionally, this is one of the three pore-forming subunits of the heterotrimeric epithelial sodium channel (ENaC), a critical regulator of sodium balance and fluid homeostasis. ENaC operates in epithelial tissues, where it mediates the electrodiffusion of sodium ions from extracellular fluid through the apical membrane of cells, with water following osmotically. It plays a key role in maintaining sodium homeostasis through electrogenic sodium reabsorption in the kidneys. Additionally, ENaC is essential for airway surface liquid homeostasis, which is crucial for proper mucus clearance. In Oryctolagus cuniculus (Rabbit), this protein is Epithelial sodium channel subunit gamma.